A 300-amino-acid polypeptide reads, in one-letter code: uncharacterized protein (300 aa).

Residues 10–67 (FDLNLLVIFECIYQHLSISKAAESLYITPSAVSQSLQRLRAQFNDPLFIRSGKGIAPT) enclose the HTH lysR-type domain. Positions 27-46 (ISKAAESLYITPSAVSQSLQ) form a DNA-binding region, H-T-H motif.

Belongs to the LysR transcriptional regulatory family.

This is an uncharacterized protein from Escherichia coli (strain K12).